The sequence spans 864 residues: Mitochondrial 15S rRNA processing factor CCM1 (864 aa).

A mitochondrion-targeting transit peptide spans 1-76 (MYMARCGPKN…REFSNTLKER (76 aa)). PPR repeat units follow at residues 319 to 353 (NKQN…STKH) and 356 to 390 (DICT…NIKP).

It belongs to the CCM1 family. Binds to mitochondrial small subunit 15S rRNA.

The protein localises to the mitochondrion. In terms of biological role, regulates mitochondrial small subunit maturation by controlling 15S rRNA 5'-end processing. Localizes to the 5' precursor of the 15S rRNA in a position that is subsequently occupied by mS47 in the mature yeast mtSSU. Uses structure and sequence-specific RNA recognition, binding to a single-stranded region of the precursor and specifically recognizing bases -6 to -1. The exchange of Ccm1 for mS47 is coupled to the irreversible removal of precursor rRNA that is accompanied by conformational changes of the mitoribosomal proteins uS5m and mS26. These conformational changes signal completion of 5'-end rRNA processing through protection of the mature 5'-end of the 15S rRNA and stabilization of mS47. The removal of the 5' precursor together with the dissociation of Ccm1 may be catalyzed by the 5'-3' exoribonuclease Pet127. Involved in the specific removal of group I introns in mitochondrial encoded transcripts. The sequence is that of Mitochondrial 15S rRNA processing factor CCM1 (CCM1) from Saccharomyces cerevisiae (strain JAY291) (Baker's yeast).